The primary structure comprises 130 residues: MAGRGKTLGSGGAKKATSRSSKAGLQFPVGRIARFLKAGKYAERVGAGAPVYLAAVLEYLAAEVLELAGNAARDNKKTRIVPRHIQLAVRNDEELSKLLGDVTIANGGVMPNIHNLLLPKKAGASKPQED.

The span at 1–12 shows a compositional bias: gly residues; that stretch reads MAGRGKTLGSGG. The tract at residues 1–23 is disordered; the sequence is MAGRGKTLGSGGAKKATSRSSKA.

This sequence belongs to the histone H2A family. In terms of assembly, the nucleosome is a histone octamer containing two molecules each of H2A, H2B, H3 and H4 assembled in one H3-H4 heterotetramer and two H2A-H2B heterodimers. The octamer wraps approximately 147 bp of DNA. Interacts with VIP1. Post-translationally, not ubiquitinated. As to expression, low level of expression, mainly in dividing tissues: floral buds, margins of newly emerging leaves, expanding leaves and the meristematic zone of root tips. Also expressed in many non-dividing cells of the elongation zone of the root.

The protein resides in the nucleus. It localises to the chromosome. Functionally, core component of nucleosome. Nucleosomes wrap and compact DNA into chromatin, limiting DNA accessibility to the cellular machineries which require DNA as a template. Histones thereby play a central role in transcription regulation, DNA repair, DNA replication and chromosomal stability. DNA accessibility is regulated via a complex set of post-translational modifications of histones, also called histone code, and nucleosome remodeling. Required for the T-DNA integration step of plant transformation by Agrobacterium. May play an important role in illegitimate recombination. In Arabidopsis thaliana (Mouse-ear cress), this protein is Histone H2A.6 (RAT5).